Here is a 338-residue protein sequence, read N- to C-terminus: UDP-N-acetylenolpyruvoylglucosamine reductase (338 aa).

One can recognise an FAD-binding PCMH-type domain in the interval 17-188 (IAARTDWWID…MYVDYRLRLK (172 aa)). Arg164 is an active-site residue. The active-site Proton donor is Ser237. The active site involves Glu333.

It belongs to the MurB family. It depends on FAD as a cofactor.

The protein localises to the cytoplasm. It catalyses the reaction UDP-N-acetyl-alpha-D-muramate + NADP(+) = UDP-N-acetyl-3-O-(1-carboxyvinyl)-alpha-D-glucosamine + NADPH + H(+). The protein operates within cell wall biogenesis; peptidoglycan biosynthesis. Functionally, cell wall formation. In Porphyromonas gingivalis (strain ATCC BAA-308 / W83), this protein is UDP-N-acetylenolpyruvoylglucosamine reductase.